The following is a 135-amino-acid chain: MPVDFNGYWKMLSNENFEEYLRALDVNVALRKIANLLKPDKEIVQDGDHMIIRTLSTFRNYIMDFQVGKEFEEDLTGIDDRKCMTTVSWDGDKLQCVQKGEKEGRGWTQWIEGDELHLEMRAEGVTCKQVFKKVH.

The segment at 22 to 32 (RALDVNVALRK) is important for interaction with STRA6. The all-trans-retinol site is built by K41, M63, and Q109.

The protein belongs to the calycin superfamily. Fatty-acid binding protein (FABP) family. As to quaternary structure, interacts (only as retinol-free apoprotein) with STRA6.

Its subcellular location is the cytoplasm. It localises to the lipid droplet. Cytoplasmic retinol-binding protein. Accepts retinol from the transport protein STRA6, and thereby contributes to retinol uptake, storage and retinoid homeostasis. In Rattus norvegicus (Rat), this protein is Retinol-binding protein 1 (Rbp1).